Reading from the N-terminus, the 396-residue chain is Putative F-box/kelch-repeat protein At3g17540 (396 aa).

Positions 4–50 (TMVISDLPHEIESEILSRVPTKSLAKLHTTCKRWYALFRDPRFVKKN) constitute an F-box domain. Kelch repeat units lie at residues 163–209 (LRYC…GMSL), 253–299 (VLSI…FLAV), and 338–386 (RIYI…KRKG).

In Arabidopsis thaliana (Mouse-ear cress), this protein is Putative F-box/kelch-repeat protein At3g17540.